Here is a 448-residue protein sequence, read N- to C-terminus: MKKEKTERTKQSWRKAQNAPSLSEVNNSVAIPKNAKFFRKLFAFMGPGALIAVGYVDPGNWATSIAGGSEFGYTLLSVILISNILAVLLQSLASKLGIVTGRDLAQASSDHFSKPFGFVLWILAELAIIATDIAEVIGSAIALNLLFGIPLIWGVCITALDIFLVLFLQHKGFRYIEVIVITLMVTILVCFGAEMVMSHPDMQAIAKGFIPQSEIVTNPAMLYIALGILGATVMPHNLYLHSSIVQTRQYARTKEGKREAIRFSFIDSTFSLTIALLINASILILAAAAFYTTGQHNVAGIEDAYKLLNPTLGSSIASTVFAVALLASGQNSTLTGTLAGQIVMEGFLNIRLKPVVRRLLTRVLAIVPAVIITALYGANGINELLIFSQVILSMQLSFAVIPLVMFTSDKQKMGEFVNSPWLKIVSWSVAIFIAFLNIYLLFYTLTSL.

Helical transmembrane passes span 41–61, 69–89, 117–137, 147–167, 176–196, 215–235, 270–290, 307–327, 363–383, 384–404, and 424–444; these read LFAF…PGNW, SEFG…AVLL, GFVL…AEVI, FGIP…LVLF, IEVI…AEMV, IVTN…TVMP, FSLT…AAAF, LLNP…ALLA, VLAI…GINE, LLIF…IPLV, and IVSW…LFYT.

This sequence belongs to the NRAMP family.

The protein resides in the cell membrane. H(+)-stimulated, divalent metal cation uptake system. This Listeria innocua serovar 6a (strain ATCC BAA-680 / CLIP 11262) protein is Divalent metal cation transporter MntH.